Consider the following 655-residue polypeptide: Macrolide export ATP-binding/permease protein MacB (655 aa).

Residues 6–244 (IELRDVWREF…DALAGDEGPE (239 aa)) form the ABC transporter domain. ATP is bound at residue 42–49 (GASGSGKS). The tract at residues 225 to 252 (DQARPDAPPLDALAGDEGPEAPRPAPQP) is disordered. Helical transmembrane passes span 280–300 (LTML…ALGA), 527–547 (LTLL…IGVM), 583–603 (VLVC…IGVL), and 620–640 (SMVL…FLPA).

Belongs to the ABC transporter superfamily. Macrolide exporter (TC 3.A.1.122) family. In terms of assembly, homodimer.

It is found in the cell inner membrane. In terms of biological role, non-canonical ABC transporter that contains transmembrane domains (TMD), which form a pore in the inner membrane, and an ATP-binding domain (NBD), which is responsible for energy generation. Confers resistance against macrolides. The protein is Macrolide export ATP-binding/permease protein MacB of Bordetella avium (strain 197N).